The chain runs to 455 residues: Tumor necrosis factor receptor superfamily member 1A (455 aa).

A signal peptide spans 1–29 (MGLSTVPDLLLPLVLLELLVGIYPSGVIG). Over 30–211 (LVPHLGDREK…VKGTEDSGTT (182 aa)) the chain is Extracellular. 4 TNFR-Cys repeats span residues 43–82 (VCPQGKYIHPQNNSICCTKCHKGTYLYNDCPGPGQDTDCR), 83–125 (ECES…DTVC), 126–166 (GCRK…NTVC), and 167–196 (TCHAGFFLRENECVSCSNCKKSLECTKLCL). Intrachain disulfides connect Cys44/Cys58, Cys59/Cys72, Cys62/Cys81, Cys84/Cys99, Cys102/Cys117, Cys105/Cys125, and Cys127/Cys143. A glycan (N-linked (GlcNAc...) asparagine) is linked at Asn54. N-linked (GlcNAc...) asparagine glycosylation is found at Asn145 and Asn151. Intrachain disulfides connect Cys146-Cys158, Cys149-Cys166, Cys168-Cys179, Cys182-Cys195, and Cys185-Cys191. A helical membrane pass occupies residues 212–232 (VLLPLVIFFGLCLLSLLFIGL). Residues 233–455 (MYRYQRWKSK…ALPPAPSLLR (223 aa)) are Cytoplasmic-facing. The disordered stretch occupies residues 254-273 (EKEGELEGTTTKPLAPNPSF). The interval 338-348 (LQKWEDSAHKP) is N-SMase activation domain (NSD). The 86-residue stretch at 356–441 (PATLYAVVEN…GCLEDIEEAL (86 aa)) folds into the Death domain. Arg376 carries a (Microbial infection) N-beta-linked (GlcNAc) arginine glycan.

As to quaternary structure, binding of TNF to the extracellular domain leads to homotrimerization. The aggregated death domains provide a novel molecular interface that interacts specifically with the death domain of TRADD. Various TRADD-interacting proteins such as TRAFS, RIPK1 and possibly FADD, are recruited to the complex by their association with TRADD. This complex activates at least two distinct signaling cascades, apoptosis and NF-kappa-B signaling. Interacts with BAG4, BABAM2, FEM1B, GRB2, SQSTM1 and TRPC4AP. Interacts directly with NOL3 (via CARD domain); inhibits TNF-signaling pathway. Interacts with SH3RF2, TRADD and RIPK1. SH3RF2 facilitates the recruitment of RIPK1 and TRADD to TNFRSF1A in a TNF-alpha-dependent process. Interacts with PGLYRP1; this interaction is important for cell death induction. Interacts (via death domain) with MADD (via death domain). In terms of assembly, (Microbial infection) Interacts with mumps virus protein SH; this interaction inhibits downstream NF-kappa-B pathway activation. (Microbial infection) Interacts with HCV core protein. As to quaternary structure, (Microbial infection) Interacts with human cytomegalovirus/HHV-5 protein UL138. In terms of assembly, (Microbial infection) Interacts with host TNFRSF1A; this interaction leads to the stimulation of both surface expression and shedding of TNFRSF1A. In terms of processing, the soluble form is produced from the membrane form by proteolytic processing. (Microbial infection) Glycosylated at Arg-376 by enteropathogenic E.coli protein NleB1 and S.typhimurium protein Ssek3: arginine GlcNAcylation prevents homotypic/heterotypic death domain interactions.

Its subcellular location is the cell membrane. The protein resides in the golgi apparatus membrane. It is found in the secreted. Receptor for TNFSF2/TNF-alpha and homotrimeric TNFSF1/lymphotoxin-alpha. The adapter molecule FADD recruits caspase-8 to the activated receptor. The resulting death-inducing signaling complex (DISC) performs caspase-8 proteolytic activation which initiates the subsequent cascade of caspases (aspartate-specific cysteine proteases) mediating apoptosis. Contributes to the induction of non-cytocidal TNF effects including anti-viral state and activation of the acid sphingomyelinase. This chain is Tumor necrosis factor receptor superfamily member 1A (TNFRSF1A), found in Homo sapiens (Human).